The primary structure comprises 249 residues: Putative S-adenosyl-L-methionine-dependent methyltransferase Mjls_0570 (249 aa).

Residues Asp111 and 141-142 each bind S-adenosyl-L-methionine; that span reads DL.

This sequence belongs to the UPF0677 family.

In terms of biological role, exhibits S-adenosyl-L-methionine-dependent methyltransferase activity. The polypeptide is Putative S-adenosyl-L-methionine-dependent methyltransferase Mjls_0570 (Mycobacterium sp. (strain JLS)).